The primary structure comprises 117 residues: Ig heavy chain V region 5-84 (117 aa).

The signal sequence occupies residues 1–19 (MNFGLSLIFLVLVLKGVLC). Residues 20-49 (EVKLVESGGGLVQPGGSLKLSCAASGFTFS) are framework-1. Cys41 and Cys115 form a disulfide bridge. The complementarity-determining-1 stretch occupies residues 50 to 54 (SYTMS). The tract at residues 55 to 68 (WVRQTPEKRLEWVA) is framework-2. The complementarity-determining-2 stretch occupies residues 69–85 (YISNGGGSTYYPDTVKG). Residues 86-117 (RFTISRDNAKNNLYLQMSSLKSEDTAMYYCAR) form a framework-3 region.

The protein is Ig heavy chain V region 5-84 of Mus musculus (Mouse).